A 716-amino-acid polypeptide reads, in one-letter code: MIYQSPTIQVELLEDNIAKLCFNAPGSVNKFDRETLASLDAALDSIKQNSNIKALVLTSSKDTFIVGADITEFLGLFAQDDAVLLSWVEQANAVFNKLEDLPFPTASAIKGFALGGGCETILATDFRIADTTAKIGLPETKLGIIPGFGGTVRLPRVIGADNALEWISTGNDQRAEDALKVGAVDAVVAPEALEAAAIQMLKDAVAEKLDWQARRNRKLSALTLPKLEAMMSFTTAKGMVFAVAGKHYPAPMAAVSVIEQASTKGRAEALQIEHQAFIKLAKTDVAKALIGIFLNDQLVKGKAKKAGKLAKEVKNAAVLGAGIMGGGIAYQSASKGTPIVMKDIAQPALDLGLNEAAKLLSAQVARGRSTPEKMAKVLNNITPSLDYAALKHSDVVVEAVVEHPKIKAQVLAEVEGYVSEDAIIASNTSTISINLLAKSMKKPERFCGMHFFNPVHKMPLVEVIRGEHSSEETIASVVAYASKMGKTPIVVNDCPGFFVNRVLFPYFAGFNGLLAEGGDFAAIDKVMEKQFGWPMGPAYLLDVVGLDTGHHAQAVMAEGFPDRMGKSGTDAIDVMFENKRLGQKNGKGFYVYSVDSRGKPKKDVDPTSYGLLKDAFGELKTFEADDIIARTMIPMIIETVRCLEEGIVASPAEADMGLVYGLGFPPFRGGVFRYLDTMGVANFVALADKYAHLGGLYQVTDAMRTKATNNGSYYQA.

The tract at residues 1 to 189 (MIYQSPTIQV…KVGAVDAVVA (189 aa)) is enoyl-CoA hydratase/isomerase. A substrate-binding site is contributed by Asp296. Positions 311-716 (KEVKNAAVLG…ATNNGSYYQA (406 aa)) are 3-hydroxyacyl-CoA dehydrogenase. Residues Met324, Asp343, 400–402 (VVE), Lys407, and Ser429 each bind NAD(+). The active-site For 3-hydroxyacyl-CoA dehydrogenase activity is the His450. Residue Asn453 coordinates NAD(+). Residues Asn500 and Tyr660 each coordinate substrate.

It in the N-terminal section; belongs to the enoyl-CoA hydratase/isomerase family. This sequence in the C-terminal section; belongs to the 3-hydroxyacyl-CoA dehydrogenase family. As to quaternary structure, heterotetramer of two alpha chains (FadB) and two beta chains (FadA).

It carries out the reaction a (3S)-3-hydroxyacyl-CoA + NAD(+) = a 3-oxoacyl-CoA + NADH + H(+). The enzyme catalyses a (3S)-3-hydroxyacyl-CoA = a (2E)-enoyl-CoA + H2O. The catalysed reaction is a 4-saturated-(3S)-3-hydroxyacyl-CoA = a (3E)-enoyl-CoA + H2O. It catalyses the reaction (3S)-3-hydroxybutanoyl-CoA = (3R)-3-hydroxybutanoyl-CoA. It carries out the reaction a (3Z)-enoyl-CoA = a 4-saturated (2E)-enoyl-CoA. The enzyme catalyses a (3E)-enoyl-CoA = a 4-saturated (2E)-enoyl-CoA. Its pathway is lipid metabolism; fatty acid beta-oxidation. Involved in the aerobic and anaerobic degradation of long-chain fatty acids via beta-oxidation cycle. Catalyzes the formation of 3-oxoacyl-CoA from enoyl-CoA via L-3-hydroxyacyl-CoA. It can also use D-3-hydroxyacyl-CoA and cis-3-enoyl-CoA as substrate. In Shewanella putrefaciens (strain CN-32 / ATCC BAA-453), this protein is Fatty acid oxidation complex subunit alpha.